A 275-amino-acid chain; its full sequence is Large ribosomal subunit protein uL2 (275 aa).

A disordered region spans residues arginine 221–lysine 275.

Belongs to the universal ribosomal protein uL2 family. As to quaternary structure, part of the 50S ribosomal subunit. Forms a bridge to the 30S subunit in the 70S ribosome.

Functionally, one of the primary rRNA binding proteins. Required for association of the 30S and 50S subunits to form the 70S ribosome, for tRNA binding and peptide bond formation. It has been suggested to have peptidyltransferase activity; this is somewhat controversial. Makes several contacts with the 16S rRNA in the 70S ribosome. The polypeptide is Large ribosomal subunit protein uL2 (Kosmotoga olearia (strain ATCC BAA-1733 / DSM 21960 / TBF 19.5.1)).